We begin with the raw amino-acid sequence, 294 residues long: MVTIDEVAEILSKRSLEYSMINYPDKKEKSIDIIAVNRNKKMIVKILGNKKSSKIKSDLKNIARIGLGIPVIIEDSTEQEIINDRGNILGMNVETFERILDGEKVFLYKTRGGIFVKINSKELKKKREEMGLSLGEVAQALGVSRISIYDYEREDSYVSIDIAEKLVELFGDDILGDVLSGFKVDEKDINLETQTASLSDKIMLNLNEKGYKVVKMNFTAVDIIASKNDKKLLFSVEADNVSKSLRKFNEAKKITSKIKASLIVVVKESKNKKIYEKEDFNTISENEIMNYEFD.

The region spanning 123–175 (LKKKREEMGLSLGEVAQALGVSRISIYDYEREDSYVSIDIAEKLVELFGDDIL) is the HTH cro/C1-type domain. Positions 134–153 (LGEVAQALGVSRISIYDYER) form a DNA-binding region, H-T-H motif.

This is Putative HTH-type transcriptional regulatory protein STK_12680 from Sulfurisphaera tokodaii (strain DSM 16993 / JCM 10545 / NBRC 100140 / 7) (Sulfolobus tokodaii).